A 218-amino-acid polypeptide reads, in one-letter code: Deoxyribose-phosphate aldolase (218 aa).

Aspartate 92 serves as the catalytic Proton donor/acceptor. The active-site Schiff-base intermediate with acetaldehyde is lysine 156. The active-site Proton donor/acceptor is the lysine 185.

Belongs to the DeoC/FbaB aldolase family. DeoC type 1 subfamily.

The protein localises to the cytoplasm. The catalysed reaction is 2-deoxy-D-ribose 5-phosphate = D-glyceraldehyde 3-phosphate + acetaldehyde. It functions in the pathway carbohydrate degradation; 2-deoxy-D-ribose 1-phosphate degradation; D-glyceraldehyde 3-phosphate and acetaldehyde from 2-deoxy-alpha-D-ribose 1-phosphate: step 2/2. Its function is as follows. Catalyzes a reversible aldol reaction between acetaldehyde and D-glyceraldehyde 3-phosphate to generate 2-deoxy-D-ribose 5-phosphate. The chain is Deoxyribose-phosphate aldolase from Desulfitobacterium hafniense (strain Y51).